We begin with the raw amino-acid sequence, 208 residues long: Ribosomal RNA small subunit methyltransferase G (208 aa).

Residues Gly-77, Leu-82, 128–129 (VE), and Arg-142 each bind S-adenosyl-L-methionine.

Belongs to the methyltransferase superfamily. RNA methyltransferase RsmG family.

The protein resides in the cytoplasm. It carries out the reaction guanosine(527) in 16S rRNA + S-adenosyl-L-methionine = N(7)-methylguanosine(527) in 16S rRNA + S-adenosyl-L-homocysteine. Functionally, specifically methylates the N7 position of guanine in position 527 of 16S rRNA. The sequence is that of Ribosomal RNA small subunit methyltransferase G from Chromohalobacter salexigens (strain ATCC BAA-138 / DSM 3043 / CIP 106854 / NCIMB 13768 / 1H11).